A 413-amino-acid polypeptide reads, in one-letter code: Probable glucan 1,3-beta-glucosidase ARB_04467 (413 aa).

An N-terminal signal peptide occupies residues 1–17 (MKFGSLLGLSLVGLSVA). Residues Glu-46, Glu-202, and Tyr-262 each contribute to the substrate site. Glu-202 serves as the catalytic Proton donor. Cys-282 and Cys-412 are disulfide-bonded. Glu-300 functions as the Nucleophile in the catalytic mechanism.

It belongs to the glycosyl hydrolase 5 (cellulase A) family. Monomer.

The protein resides in the secreted. Its subcellular location is the cell wall. The catalysed reaction is Successive hydrolysis of beta-D-glucose units from the non-reducing ends of (1-&gt;3)-beta-D-glucans, releasing alpha-glucose.. Its function is as follows. Major glucan 1,3-beta-glucosidase required for cell wall integrity. Beta-glucanases participate in the metabolism of beta-glucan, the main structural component of the cell wall. Can also function biosynthetically as a transglycosylase. Functions to deliver glucan from the cell to the extracellular matrix. Involved in cell-substrate and cell-cell adhesion. The chain is Probable glucan 1,3-beta-glucosidase ARB_04467 from Arthroderma benhamiae (strain ATCC MYA-4681 / CBS 112371) (Trichophyton mentagrophytes).